The sequence spans 72 residues: SPbeta prophage-derived uncharacterized protein YorV (72 aa).

The protein is SPbeta prophage-derived uncharacterized protein YorV (yorV) of Bacillus subtilis (strain 168).